The primary structure comprises 1032 residues: Argonaute protein hrde-1 (1032 aa).

2 disordered regions span residues methionine 1–arginine 51 and lysine 298–serine 375. The tract at residues methionine 1–proline 551 is required to recruit the small-RNA amplification machinery to gene targets and promote gene silencing. Basic and acidic residues predominate over residues proline 18–serine 33. Over residues lysine 303–glycine 313 the composition is skewed to gly residues. Composition is skewed to basic and acidic residues over residues serine 315–arginine 335 and glycine 343–serine 364. One can recognise a PAZ domain in the interval aspartate 376 to proline 481. Residues aspartate 650–lysine 977 form the Piwi domain.

It belongs to the argonaute family. WAGO subfamily. In terms of tissue distribution, expressed in the nuclei of male and female germ cells.

The protein localises to the cytoplasm. Its subcellular location is the cytoplasmic ribonucleoprotein granule. The protein resides in the nucleus. Functionally, argonaute protein which is involved in the endogenous small interfering RNA (endo-siRNA) pathway and is required for RNA-mediated gene silencing (RNAi) in the germline. Interacts with secondary 22G-RNAs in an hrde-2-dependent manner; 22G-RNAs are RNA-dependent RNA polymerase-derived endo-siRNAs, typically 22 nucleotides in length with a 5'-guanosine residue. Plays a key role in transgenerational epigenetic inheritance and germline immortality. May be involved in transgenerational gene silencing both by inducing subnuclear-co-localization of target genes into heterochromatin and by activation of small RNA amplification in the nuage. The protein is Argonaute protein hrde-1 of Caenorhabditis elegans.